The following is a 313-amino-acid chain: Homoserine O-succinyltransferase (313 aa).

The Acyl-thioester intermediate role is filled by Cys142. Substrate-binding residues include Lys163 and Ser192. The active-site Proton acceptor is His235. Residue Glu237 is part of the active site. Arg249 serves as a coordination point for substrate.

Belongs to the MetA family.

It is found in the cytoplasm. It carries out the reaction L-homoserine + succinyl-CoA = O-succinyl-L-homoserine + CoA. It participates in amino-acid biosynthesis; L-methionine biosynthesis via de novo pathway; O-succinyl-L-homoserine from L-homoserine: step 1/1. Functionally, transfers a succinyl group from succinyl-CoA to L-homoserine, forming succinyl-L-homoserine. This chain is Homoserine O-succinyltransferase, found in Shewanella sp. (strain ANA-3).